The primary structure comprises 241 residues: Large ribosomal subunit protein uL3 (241 aa).

Disordered stretches follow at residues 140 to 168 (SHRS…HMGD) and 216 to 241 (APKP…EEGA). Residue Gln151 is modified to N5-methylglutamine.

Belongs to the universal ribosomal protein uL3 family. In terms of assembly, part of the 50S ribosomal subunit. Forms a cluster with proteins L14 and L19. Post-translationally, methylated by PrmB.

One of the primary rRNA binding proteins, it binds directly near the 3'-end of the 23S rRNA, where it nucleates assembly of the 50S subunit. In Xanthobacter autotrophicus (strain ATCC BAA-1158 / Py2), this protein is Large ribosomal subunit protein uL3.